Consider the following 258-residue polypeptide: GCN5-related N-acetyltransferase 2, chloroplastic (258 aa).

The transit peptide at methionine 1–arginine 58 directs the protein to the chloroplast. Residues isoleucine 107 to aspartate 194 form an interaction with begomoviruses NSP protein region. The N-acetyltransferase domain maps to isoleucine 107–lysine 258. Residues valine 195–valine 197, glycine 203–lysine 208, aspartate 231–glutamine 233, and tyrosine 238 contribute to the acetyl-CoA site. The Proton donor role is filled by tyrosine 238.

The protein belongs to the acetyltransferase family. GNAT subfamily. As to quaternary structure, oligomer. Interacts with begomoviruses NSP but not with CP. This interaction may allow NSP to recruit NSI monomers to acetylate viral genome-bound CP and thus regulate nuclear export of viral genome by NSP. S-sulfhydrated and activated by hydrogen sulfide H(2)S to promote melatonin accumulation and subsequent melatonin-dependent stomotal closure to combat osmotic stress. Post-translationally, autoacetylated. In terms of tissue distribution, highly expressed in cauline leaves and seeds, at lower levels in stems, siliques, inflorescences and rosettes leaves and at very low levels in roots. Expressed in the xylem parenchyma and phloem of the leaves and root, and in guard cells of young leaves.

It localises to the plastid. Its subcellular location is the chloroplast. It carries out the reaction 5-methoxytryptamine + acetyl-CoA = melatonin + CoA + H(+). The catalysed reaction is L-lysyl-[histone] + acetyl-CoA = N(6)-acetyl-L-lysyl-[histone] + CoA + H(+). The enzyme catalyses L-lysyl-[protein] + acetyl-CoA = N(6)-acetyl-L-lysyl-[protein] + CoA + H(+). It catalyses the reaction serotonin + acetyl-CoA = N-acetylserotonin + CoA + H(+). It carries out the reaction N-terminal L-alanyl-[protein] + acetyl-CoA = N-terminal N(alpha)-acetyl-L-alanyl-[protein] + CoA + H(+). The catalysed reaction is N-terminal L-seryl-[protein] + acetyl-CoA = N-terminal N(alpha)-acetyl-L-seryl-[protein] + CoA + H(+). The enzyme catalyses N-terminal L-valyl-[protein] + acetyl-CoA = N-terminal N(alpha)-acetyl-L-valyl-[protein] + CoA + H(+). It catalyses the reaction N-terminal glycyl-[protein] + acetyl-CoA = N-terminal N(alpha)-acetylglycyl-[protein] + CoA + H(+). It carries out the reaction an N-terminal L-alpha-aminoacyl-[protein] + acetyl-CoA = N-terminal N(alpha)-acetyl-L-alpha-aminoacyl-[protein] + CoA + H(+). The catalysed reaction is N-terminal L-threonyl-[protein] + acetyl-CoA = N-terminal N(alpha)-acetyl-L-threonyl-[protein] + CoA + H(+). The enzyme catalyses N-terminal L-methionyl-[protein] + acetyl-CoA = N-terminal N(alpha)-acetyl-L-methionyl-[protein] + CoA + H(+). It catalyses the reaction N-terminal L-leucyl-[protein] + acetyl-CoA = N-terminal N(alpha)-acetyl-L-leucyl-[protein] + CoA + H(+). Its activity is regulated as follows. Inhibited by the viral nuclear shuttle protein (NSP) that binds to the region required for oligomerization. In terms of biological role, protein acetyltransferase with dual specificity triggering both N-alpha-acetylation (NTA), with a preference for alanine, serine, threonine, methionine and to a lower extent valine as substrates (can also use glycine and leucine), and epsilon-lysine acetylation (KA) of several plastid proteins. Triggers lysine acetylation in KEA1 and KEA2. Acetylates in vitro histones H2A and H3. Does not act as a transcriptional activator but required for the dynamic reorganization of thylakoid protein complexes and grana during photosynthetic state transitions. Involved in melatonin biosynthesis by catalyzing the formation of N-acetylserotonin (NAS) from serotonin and of melatonin (N-acetyl-5-methoxytryptamine) from 5-methoxytryptamine (5-MT). By triggering melatonin biosynthesis, contributes to the chloroplast protein quality control (CPQC), which plays a pivotal role in starch synthesis, and confers melatonin-associated tolerance to high light (HL) stress. Prevents the accumulation of oil and anthocyanin content in mature seeds and avoids seed germination in a melatonin-dependent manner, but promotes mucilage production in the seed coat. Contributes to melatonin-mediated anthocyanin production in cold-exposed seedlings. Implicated in melatonin-monitored circadian dynamics of stomatal aperture to minimize night water loss and promote drought tolerance, partly by triggering hydrogen sulfide H(2)S-dependent stomotal closure in response to osmotic stress. Its function is as follows. (Microbial infection) Required for begomovirus infection and systemic spread. In case of begomoviruses infection, acetylates the capsid protein (CP), but not the nuclear shuttle protein (NSP). Stimulates melatonin-triggered defense responses to the necrotrophic Botrytis cinerea. In Arabidopsis thaliana (Mouse-ear cress), this protein is GCN5-related N-acetyltransferase 2, chloroplastic.